A 321-amino-acid polypeptide reads, in one-letter code: Beta-1,3-N-acetylglucosaminyltransferase manic fringe (321 aa).

The Cytoplasmic portion of the chain corresponds to 1 to 7 (MQCRLPR). Residues 8–27 (GLAGALLTLLCMGLLCLRYH) form a helical; Signal-anchor for type II membrane protein membrane-spanning segment. Topologically, residues 28–321 (LNLSPQRVQE…TPWCPQLGAR (294 aa)) are lumenal. R70 is a substrate binding site. N109 carries an N-linked (GlcNAc...) asparagine glycan. Cystine bridges form between C110/C121 and C139/C202. Residue D143 coordinates substrate. A Mn(2+)-binding site is contributed by D144. N185 carries an N-linked (GlcNAc...) asparagine glycan. Residue D232 is part of the active site. H256 provides a ligand contact to Mn(2+). An intrachain disulfide couples C306 to C315.

It belongs to the glycosyltransferase 31 family. The cofactor is Mn(2+).

It is found in the golgi apparatus membrane. The catalysed reaction is 3-O-(alpha-L-fucosyl)-L-threonyl-[EGF-like domain protein] + UDP-N-acetyl-alpha-D-glucosamine = 3-O-(N-acetyl-beta-D-glucosaminyl-(1-&gt;3)-alpha-L-fucosyl)-L-threonyl-[EGF-like domain protein] + UDP + H(+). It carries out the reaction 3-O-(alpha-L-fucosyl)-L-seryl-[EGF-like domain protein] + UDP-N-acetyl-alpha-D-glucosamine = 3-O-(N-acetyl-beta-D-glucosaminyl-(1-&gt;3)-alpha-L-fucosyl)-L-seryl-[EGF-like domain protein] + UDP + H(+). Glycosyltransferase that initiates the elongation of O-linked fucose residues attached to EGF-like repeats in the extracellular domain of Notch molecules. Modulates NOTCH1 activity by modifying O-fucose residues at specific EGF-like domains resulting in inhibition of NOTCH1 activation by JAG1 and enhancement of NOTCH1 activation by DLL1 via an increase in its binding to DLL1. In Pan troglodytes (Chimpanzee), this protein is Beta-1,3-N-acetylglucosaminyltransferase manic fringe (MFNG).